The sequence spans 88 residues: Small ribosomal subunit protein bS20 (88 aa).

Residues 1–27 are disordered; it reads MANSKSAKKRALQSEKRRQHNASRRSM.

This sequence belongs to the bacterial ribosomal protein bS20 family.

Binds directly to 16S ribosomal RNA. This chain is Small ribosomal subunit protein bS20, found in Shewanella putrefaciens (strain CN-32 / ATCC BAA-453).